We begin with the raw amino-acid sequence, 477 residues long: MPEPPRDIMAEACEATRPSEDEDEEREPLLPRVAWAQPRRGAPGSAVRLQADQGAAVLREPATEEPPVVSEDRSISASLSTELDRTRNAVSETNTFLEDPEFADVVLKAEQAIEIGVFPERISQGSSGSYFVKDSKRTIIGVFKPKSEEPYGQLNPKWTKYVHKVCCPCCFGRGCLLPNQGYLSEAGAYLVDTKLQLGIVPKTKVVWLVSETFNYSAIDRAKSRGKKYALEKVPKVGRKFHRIGLPPKIGSFQLFVKDYKEAEYWLRRFEAEPLPENIRKQFQSQFERLVILDYIIRNTDRGNDNWLVKYDEMKYAKKIESEESNWIDDKQLLIRIAAIDNGLAFPFKHPDEWRAYPFHWAWLPQAKVPFSEETRNLILPFISDMNFVQDLCEDLYELFKTDKGFDRAAFESQMSVMRGQILNLTQALRDGKSPMQLAQMPCVIVECSKSGGQGRVVHLGSSFTQTVHCRKPFFSSW.

Positions 1–80 are disordered; the sequence is MPEPPRDIMA…EDRSISASLS (80 aa). Phosphoserine is present on S45. Positions 116–447 constitute a PI3K/PI4K catalytic domain; sequence GVFPERISQG…AQMPCVIVEC (332 aa). The tract at residues 122-128 is G-loop; sequence ISQGSSG. The ATP site is built by S129 and K144. Residues 149–151 form an important for substrate binding region; that stretch reads EPY. Residues 157-170 are important for interaction with membranes; that stretch reads KWTKYVHKVCCPCC. Residues 253–256 and 267–268 contribute to the ATP site; these read QLFV and RR. Residues 260–268 form an important for interaction with membranes region; it reads KEAEYWLRR. Residues 297 to 305 form a catalytic loop region; it reads RNTDRGNDN. The interval 338-358 is activation loop; sequence AIDNGLAFPFKHPDEWRAYPF. Residue D340 coordinates ATP. Positions 353–362 are important for interaction with membranes; sequence WRAYPFHWAW.

It belongs to the PI3/PI4-kinase family. Type II PI4K subfamily.

Its subcellular location is the cytoplasm. It is found in the cytosol. The protein localises to the golgi apparatus membrane. It localises to the endoplasmic reticulum membrane. The protein resides in the cell membrane. Its subcellular location is the early endosome membrane. It carries out the reaction a 1,2-diacyl-sn-glycero-3-phospho-(1D-myo-inositol) + ATP = a 1,2-diacyl-sn-glycero-3-phospho-(1D-myo-inositol 4-phosphate) + ADP + H(+). Functionally, together with PI4K2A and the type III PI4Ks (PIK4CA and PIK4CB) it contributes to the overall PI4-kinase activity of the cell. This contribution may be especially significant in plasma membrane, endosomal and Golgi compartments. The phosphorylation of phosphatidylinositol (PI) to PI4P is the first committed step in the generation of phosphatidylinositol 4,5-bisphosphate (PIP2), a precursor of the second messenger inositol 1,4,5-trisphosphate (InsP3). Contributes to the production of InsP3 in stimulated cells and is likely to be involved in the regulation of vesicular trafficking. The sequence is that of Phosphatidylinositol 4-kinase type 2-beta (Pi4k2b) from Rattus norvegicus (Rat).